The following is a 142-amino-acid chain: Putative pre-16S rRNA nuclease (142 aa).

It belongs to the YqgF nuclease family.

It is found in the cytoplasm. Could be a nuclease involved in processing of the 5'-end of pre-16S rRNA. This is Putative pre-16S rRNA nuclease from Staphylococcus aureus (strain JH1).